The primary structure comprises 73 residues: DNA gyrase inhibitor YacG (73 aa).

Zn(2+) contacts are provided by C12, C15, C31, and C35. The disordered stretch occupies residues 47 to 73 (DYAIPGEPIDPAEPSEDRNGAEGPPTD).

The protein belongs to the DNA gyrase inhibitor YacG family. As to quaternary structure, interacts with GyrB. Zn(2+) is required as a cofactor.

Its function is as follows. Inhibits all the catalytic activities of DNA gyrase by preventing its interaction with DNA. Acts by binding directly to the C-terminal domain of GyrB, which probably disrupts DNA binding by the gyrase. The polypeptide is DNA gyrase inhibitor YacG (Methylococcus capsulatus (strain ATCC 33009 / NCIMB 11132 / Bath)).